We begin with the raw amino-acid sequence, 80 residues long: Clavanin-E (80 aa).

Residues 1–19 (MKTTILILLILGLGINAKS) form the signal peptide. Positions 20-29 (LEERKSEEEK) are excised as a propeptide. A Phenylalanine amide modification is found at Phe52. Positions 54–80 (DDQQDNGKFYGYYAEDNGKHWYDTGDQ) are excised as a propeptide.

It localises to the secreted. In terms of biological role, has antimicrobial activity. This is Clavanin-E from Styela clava (Sea squirt).